The chain runs to 165 residues: Lipoprotein signal peptidase (165 aa).

The next 3 helical transmembrane spans lie at 9–29, 69–89, and 98–118; these read FLAI…VLLY, KYFL…FLFL, and IRFS…DILF. Catalysis depends on residues Asp124 and Asp142. A helical transmembrane segment spans residues 133–153; that stretch reads WYFPTFNFADIFISLGTFIFV.

Belongs to the peptidase A8 family.

It is found in the cell inner membrane. It catalyses the reaction Release of signal peptides from bacterial membrane prolipoproteins. Hydrolyzes -Xaa-Yaa-Zaa-|-(S,diacylglyceryl)Cys-, in which Xaa is hydrophobic (preferably Leu), and Yaa (Ala or Ser) and Zaa (Gly or Ala) have small, neutral side chains.. It participates in protein modification; lipoprotein biosynthesis (signal peptide cleavage). This protein specifically catalyzes the removal of signal peptides from prolipoproteins. This Chlamydia caviae (strain ATCC VR-813 / DSM 19441 / 03DC25 / GPIC) (Chlamydophila caviae) protein is Lipoprotein signal peptidase.